The primary structure comprises 1036 residues: UDP-N-acetylglucosamine--peptide N-acetylglucosaminyltransferase 110 kDa subunit (1036 aa).

N-acetylalanine is present on Ala2. Ser3 and Ser4 each carry phosphoserine; by GSK3-beta; alternate. O-linked (GlcNAc) serine; alternate glycosylation is found at Ser3 and Ser4. TPR repeat units lie at residues 11–44, 79–112, 113–146, 147–180, 181–214, 215–248, 249–282, 283–316, 317–350, 351–384, 385–418, and 419–452; these read STGL…EPDN, AEAY…KPDF, IDGY…NPDL, YCVR…QPNF, AVAW…DPNF, LDAY…SPNH, AVVH…QPHF, PDAY…CPTH, ADSL…FPEF, AAAH…SPTF, ADAY…NPAF, and ADAH…KPDF. Ser389 carries an O-linked (GlcNAc) serine; by autocatalysis glycan. Residue Thr444 is modified to Phosphothreonine. The TPR 13; truncated repeat unit spans residues 453 to 463; sequence PDAYCNLAHCL. Residues 454 to 456 carry the DFP motif motif; the sequence is DAY. The Nuclear localization signal signature appears at 478 to 493; sequence KLVSIVAEQLEKNRLP. The active-site Proton acceptor is the His498. Residues Gln839, Lys842, 896–898, 901–904, 920–922, and Asp925 each bind UDP; these read APK, HVRR, and HTT. Phosphotyrosine is present on Tyr979. Residues 981–1000 are required for phosphatidylinositol 3,4,5-triphosphate binding; it reads KKIRGKVWKQRISSPLFNTK.

This sequence belongs to the glycosyltransferase 41 family. O-GlcNAc transferase subfamily. In terms of assembly, monomer; may exist in different oligomerization states in cells. Homotrimer, oligomerizes via TPR repeats 6 and 7. Trimerization is not necessary for activity in vitro, however it increases affinity for UDP-GlcNAc. A heterotrimer consisting of two 110 kDa subunits and one highly related 78 kDa subunit is isolated from liver. Component of a THAP1/THAP3-HCFC1-OGT complex. Component of the NSL complex at least composed of MOF/KAT8, KANSL1, KANSL2, KANSL3, MCRS1, PHF20, OGT1/OGT, WDR5 and HCFC1. Found in a complex with KIF5B, RHOT1, RHOT2 and TRAK1. Found in a complex composed of at least SINHCAF, SIN3A, HDAC1, SAP30, RBBP4, OGT and TET1. Component of a complex composed of KMT2E/MLL5, OGT and USP7; the complex stabilizes KMT2E/MLL5, preventing KMT2E/MLL5 ubiquitination and proteasomal-mediated degradation. Interacts (via TPRs 1-6) with SIN3A; the interaction mediates transcriptional repression in parallel with histone deacetylase. Interacts (via TPR 5-6) with TET1, TET2 and TET3. Interacts (via TPR repeats 6 and 7) with ATXN10. Interacts with NSD2. Interacts with PROSER1; this interaction mediates TET2 O-GlcNAcylation and stability by promoting the interaction between OGT and TET2. Post-translationally, several different immunologically-related forms of this protein are found in different tissues (with apparent molecular weights of 110, 80 and 78 kDa); they are probably the result of alternative splicing and/or proteolysis. O-glycosylated; contains O-GlcNAc. Both p110 and p78 forms are O-glycosylated. In terms of processing, ubiquitinated by the SCF(FBXO31) complex, leading to its proteasomal degradation. Post-translationally, phosphorylation on Ser-3 or Ser-4 by GSK3-beta positively regulates its activity. Phosphorylation at Thr-444 by AMPK promotes nuclear localization. Glycosylated via autocatalysis; O-GlcNAcylation at Ser-389 promotes nuclear localization. In terms of tissue distribution, expressed in brain, heart, liver, thymus, muscle, lung, spleen, uterus and ovary; in the kidney only an immunologically-related 78 kDa band is present, which is also present in liver and muscle. In the pancreas, expressed in both exocrine acinar cells and in endocrine cells of the islets of Langerhans.

The protein localises to the cytoplasm. The protein resides in the nucleus. It localises to the cell membrane. It is found in the mitochondrion membrane. Its subcellular location is the cell projection. It carries out the reaction L-seryl-[protein] + UDP-N-acetyl-alpha-D-glucosamine = 3-O-(N-acetyl-beta-D-glucosaminyl)-L-seryl-[protein] + UDP + H(+). The enzyme catalyses L-threonyl-[protein] + UDP-N-acetyl-alpha-D-glucosamine = 3-O-(N-acetyl-beta-D-glucosaminyl)-L-threonyl-[protein] + UDP + H(+). The protein operates within protein modification; protein glycosylation. Inhibited by UDP, UTP and UDP-GlcNAc; 50 mM NaCl or KCl inhibit activity about 70%. Functionally, catalyzes the transfer of a single N-acetylglucosamine from UDP-GlcNAc to a serine or threonine residue in cytoplasmic and nuclear proteins resulting in their modification with a beta-linked N-acetylglucosamine (O-GlcNAc). Glycosylates a large and diverse number of proteins including histone H2B, AKT1, AMPK, ATG4B, CAPRIN1, EZH2, FNIP1, GSDMD, KRT7, LMNA, LMNB1, LMNB2, RPTOR, HOXA1, PFKL, KMT2E/MLL5, MAPT/TAU, TET2, RBL2, RET, NOD2 and HCFC1. Can regulate their cellular processes via cross-talk between glycosylation and phosphorylation or by affecting proteolytic processing. Involved in insulin resistance in muscle and adipocyte cells via glycosylating insulin signaling components and inhibiting the 'Thr-308' phosphorylation of AKT1, enhancing IRS1 phosphorylation and attenuating insulin signaling. Involved in glycolysis regulation by mediating glycosylation of 6-phosphofructokinase PFKL, inhibiting its activity. Plays a key role in chromatin structure by mediating O-GlcNAcylation of 'Ser-112' of histone H2B: recruited to CpG-rich transcription start sites of active genes via its interaction with TET proteins (TET1, TET2 or TET3). As part of the NSL complex indirectly involved in acetylation of nucleosomal histone H4 on several lysine residues. O-GlcNAcylation of 'Ser-75' of EZH2 increases its stability, and facilitating the formation of H3K27me3 by the PRC2/EED-EZH2 complex. Stabilizes KMT2E/MLL5 by mediating its glycosylation, thereby preventing KMT2E/MLL5 ubiquitination. Regulates circadian oscillation of the clock genes and glucose homeostasis in the liver. Stabilizes clock proteins BMAL1 and CLOCK through O-glycosylation, which prevents their ubiquitination and subsequent degradation. Promotes the CLOCK-BMAL1-mediated transcription of genes in the negative loop of the circadian clock such as PER1/2 and CRY1/2. O-glycosylates HCFC1 and regulates its proteolytic processing and transcriptional activity. Component of a THAP1/THAP3-HCFC1-OGT complex that is required for the regulation of the transcriptional activity of RRM1. Regulates mitochondrial motility in neurons by mediating glycosylation of TRAK1. Promotes autophagy by mediating O-glycosylation of ATG4B. Acts as a regulator of mTORC1 signaling by mediating O-glycosylation of RPTOR and FNIP1: O-GlcNAcylation of RPTOR in response to glucose sufficiency promotes activation of the mTORC1 complex. The chain is UDP-N-acetylglucosamine--peptide N-acetylglucosaminyltransferase 110 kDa subunit (Ogt) from Rattus norvegicus (Rat).